The primary structure comprises 531 residues: Peptide chain release factor 3 (531 aa).

Residues alanine 13–lysine 282 enclose the tr-type G domain. Residues serine 22 to threonine 29, aspartate 90 to histidine 94, and asparagine 144 to aspartate 147 contribute to the GTP site.

It belongs to the TRAFAC class translation factor GTPase superfamily. Classic translation factor GTPase family. PrfC subfamily.

It is found in the cytoplasm. Functionally, increases the formation of ribosomal termination complexes and stimulates activities of RF-1 and RF-2. It binds guanine nucleotides and has strong preference for UGA stop codons. It may interact directly with the ribosome. The stimulation of RF-1 and RF-2 is significantly reduced by GTP and GDP, but not by GMP. This chain is Peptide chain release factor 3, found in Psychrobacter arcticus (strain DSM 17307 / VKM B-2377 / 273-4).